Consider the following 82-residue polypeptide: Small ribosomal subunit protein bS16 (82 aa).

It belongs to the bacterial ribosomal protein bS16 family.

This chain is Small ribosomal subunit protein bS16, found in Microcystis aeruginosa (strain NIES-843 / IAM M-2473).